The following is a 237-amino-acid chain: Nodulation protein NolA (237 aa).

The HTH merR-type domain occupies 10–79 (RWRIGELAGA…LQEIRRAMDG (70 aa)). Residues 13–32 (IGELAGATGVTVRTLHHYEH) constitute a DNA-binding region (H-T-H motif).

Involved in genotype-specific nodulation of soybeans. The protein is Nodulation protein NolA (nolA) of Bradyrhizobium sp. (strain NC92).